Here is a 59-residue protein sequence, read N- to C-terminus: Light-harvesting protein B-800-850 alpha chain A (59 aa).

The Cytoplasmic segment spans residues 1–11 (MNQARIWTVVK). Residues 12 to 35 (PTVGLPLLLGSVTVIAILVHFAVL) form a helical membrane-spanning segment. His-31 is an a bacteriochlorophyll binding site. Topologically, residues 36-59 (SHTTWFSKYWNGKAAAIESSVNVG) are periplasmic.

The protein belongs to the antenna complex alpha subunit family. The core complex is formed by different alpha and beta chains, binding bacteriochlorophyll molecules, and arranged most probably in tetrameric structures disposed around the reaction center. The non-pigmented gamma chains may constitute additional components.

It localises to the cell inner membrane. Its function is as follows. Antenna complexes are light-harvesting systems, which transfer the excitation energy to the reaction centers. The chain is Light-harvesting protein B-800-850 alpha chain A (pucAA) from Rhodopseudomonas palustris (strain ATCC BAA-98 / CGA009).